Consider the following 230-residue polypeptide: Ureidoacrylate amidohydrolase RutB (230 aa).

The active-site Proton acceptor is the aspartate 24. Residue lysine 133 is part of the active site. Cysteine 166 acts as the Nucleophile in catalysis.

The protein belongs to the isochorismatase family. RutB subfamily.

The enzyme catalyses (Z)-3-ureidoacrylate + H2O + H(+) = (Z)-3-aminoacrylate + NH4(+) + CO2. It carries out the reaction (Z)-3-ureidoacrylate + H2O = (Z)-3-aminoacrylate + carbamate + H(+). The catalysed reaction is (Z)-2-methylureidoacrylate + H2O + H(+) = (Z)-2-methylaminoacrylate + NH4(+) + CO2. In terms of biological role, hydrolyzes ureidoacrylate to form aminoacrylate and carbamate. The carbamate hydrolyzes spontaneously, thereby releasing one of the nitrogen atoms of the pyrimidine ring as ammonia and one of its carbon atoms as CO2. In Escherichia coli O111:H- (strain 11128 / EHEC), this protein is Ureidoacrylate amidohydrolase RutB.